Consider the following 329-residue polypeptide: Phosphate acyltransferase (329 aa).

The protein belongs to the PlsX family. In terms of assembly, homodimer. Probably interacts with PlsY.

It localises to the cytoplasm. It carries out the reaction a fatty acyl-[ACP] + phosphate = an acyl phosphate + holo-[ACP]. Its pathway is lipid metabolism; phospholipid metabolism. Functionally, catalyzes the reversible formation of acyl-phosphate (acyl-PO(4)) from acyl-[acyl-carrier-protein] (acyl-ACP). This enzyme utilizes acyl-ACP as fatty acyl donor, but not acyl-CoA. The chain is Phosphate acyltransferase from Campylobacter concisus (strain 13826).